The sequence spans 214 residues: Probable transaldolase (214 aa).

The active-site Schiff-base intermediate with substrate is the Lys-83.

It belongs to the transaldolase family. Type 3B subfamily.

The protein localises to the cytoplasm. The catalysed reaction is D-sedoheptulose 7-phosphate + D-glyceraldehyde 3-phosphate = D-erythrose 4-phosphate + beta-D-fructose 6-phosphate. It functions in the pathway carbohydrate degradation; pentose phosphate pathway; D-glyceraldehyde 3-phosphate and beta-D-fructose 6-phosphate from D-ribose 5-phosphate and D-xylulose 5-phosphate (non-oxidative stage): step 2/3. Transaldolase is important for the balance of metabolites in the pentose-phosphate pathway. In Leptospira biflexa serovar Patoc (strain Patoc 1 / Ames), this protein is Probable transaldolase.